The chain runs to 223 residues: Endonuclease V (223 aa).

D35 and D103 together coordinate Mg(2+).

It belongs to the endonuclease V family. Mg(2+) is required as a cofactor.

The protein resides in the cytoplasm. It catalyses the reaction Endonucleolytic cleavage at apurinic or apyrimidinic sites to products with a 5'-phosphate.. Functionally, DNA repair enzyme involved in the repair of deaminated bases. Selectively cleaves double-stranded DNA at the second phosphodiester bond 3' to a deoxyinosine leaving behind the intact lesion on the nicked DNA. This is Endonuclease V from Shigella flexneri serotype 5b (strain 8401).